The chain runs to 190 residues: Potassium-transporting ATPase KdpC subunit (190 aa).

A helical membrane pass occupies residues leucine 11–alanine 31.

Belongs to the KdpC family. As to quaternary structure, the system is composed of three essential subunits: KdpA, KdpB and KdpC.

The protein resides in the cell inner membrane. Functionally, part of the high-affinity ATP-driven potassium transport (or Kdp) system, which catalyzes the hydrolysis of ATP coupled with the electrogenic transport of potassium into the cytoplasm. This subunit acts as a catalytic chaperone that increases the ATP-binding affinity of the ATP-hydrolyzing subunit KdpB by the formation of a transient KdpB/KdpC/ATP ternary complex. The protein is Potassium-transporting ATPase KdpC subunit of Pseudomonas syringae pv. tomato (strain ATCC BAA-871 / DC3000).